The primary structure comprises 75 residues: U6-lycotoxin-Ls1a (75 aa).

A signal peptide spans 1 to 21 (MKLLLFTALVLVVISLIEVEA). A propeptide spanning residues 22–25 (ENER) is cleaved from the precursor.

This sequence belongs to the neurotoxin 19 (CSTX) family. 06 (U6-Lctx) subfamily. In terms of processing, contains 4 disulfide bonds. Expressed by the venom gland.

The protein resides in the secreted. The protein is U6-lycotoxin-Ls1a of Lycosa singoriensis (Wolf spider).